We begin with the raw amino-acid sequence, 373 residues long: Queuine tRNA-ribosyltransferase (373 aa).

Aspartate 91 (proton acceptor) is an active-site residue. Residues 91 to 95, aspartate 145, and glutamine 187 contribute to the substrate site; that span reads DSGGF. Positions 245-251 are RNA binding; sequence GVGTPED. The active-site Nucleophile is the aspartate 264. The RNA binding; important for wobble base 34 recognition stretch occupies residues 269–273; the sequence is TRNAR. Residues cysteine 302, cysteine 304, cysteine 307, and histidine 333 each contribute to the Zn(2+) site.

This sequence belongs to the queuine tRNA-ribosyltransferase family. In terms of assembly, homodimer. Within each dimer, one monomer is responsible for RNA recognition and catalysis, while the other monomer binds to the replacement base PreQ1. It depends on Zn(2+) as a cofactor.

The enzyme catalyses 7-aminomethyl-7-carbaguanine + guanosine(34) in tRNA = 7-aminomethyl-7-carbaguanosine(34) in tRNA + guanine. It participates in tRNA modification; tRNA-queuosine biosynthesis. Functionally, catalyzes the base-exchange of a guanine (G) residue with the queuine precursor 7-aminomethyl-7-deazaguanine (PreQ1) at position 34 (anticodon wobble position) in tRNAs with GU(N) anticodons (tRNA-Asp, -Asn, -His and -Tyr). Catalysis occurs through a double-displacement mechanism. The nucleophile active site attacks the C1' of nucleotide 34 to detach the guanine base from the RNA, forming a covalent enzyme-RNA intermediate. The proton acceptor active site deprotonates the incoming PreQ1, allowing a nucleophilic attack on the C1' of the ribose to form the product. After dissociation, two additional enzymatic reactions on the tRNA convert PreQ1 to queuine (Q), resulting in the hypermodified nucleoside queuosine (7-(((4,5-cis-dihydroxy-2-cyclopenten-1-yl)amino)methyl)-7-deazaguanosine). The chain is Queuine tRNA-ribosyltransferase from Syntrophobacter fumaroxidans (strain DSM 10017 / MPOB).